Consider the following 650-residue polypeptide: 1-deoxy-D-xylulose-5-phosphate synthase (650 aa).

Residues H73 and 113-115 each bind thiamine diphosphate; that span reads SHA. Mg(2+) is bound at residue D145. Thiamine diphosphate contacts are provided by residues 146-147, N175, Y287, and E369; that span reads GA. N175 serves as a coordination point for Mg(2+).

This sequence belongs to the transketolase family. DXPS subfamily. Homodimer. Mg(2+) is required as a cofactor. The cofactor is thiamine diphosphate.

The enzyme catalyses D-glyceraldehyde 3-phosphate + pyruvate + H(+) = 1-deoxy-D-xylulose 5-phosphate + CO2. It functions in the pathway metabolic intermediate biosynthesis; 1-deoxy-D-xylulose 5-phosphate biosynthesis; 1-deoxy-D-xylulose 5-phosphate from D-glyceraldehyde 3-phosphate and pyruvate: step 1/1. In terms of biological role, catalyzes the acyloin condensation reaction between C atoms 2 and 3 of pyruvate and glyceraldehyde 3-phosphate to yield 1-deoxy-D-xylulose-5-phosphate (DXP). This is 1-deoxy-D-xylulose-5-phosphate synthase from Leifsonia xyli subsp. xyli (strain CTCB07).